The sequence spans 25 residues: Toxin Tpa3 (25 aa).

The protein belongs to the non-disulfide-bridged peptide (NDBP) superfamily. As to expression, expressed by the venom gland.

The protein resides in the secreted. Its function is as follows. Unknown. Is not toxic to mammals. In Tityus pachyurus (Colombian scorpion), this protein is Toxin Tpa3.